The chain runs to 152 residues: Conglutin delta 1 (152 aa).

A signal peptide spans 1–22 (MAKLTILIALVAALVLVVHTSA). Intrachain disulfides connect Cys-30/Cys-101, Cys-42/Cys-89, Cys-90/Cys-137, and Cys-103/Cys-145.

It belongs to the 2S seed storage albumins family. Heterodimer of a small chain and a large chain; disulfide-linked. As to expression, expressed in developing cotyledons and in the embryonic axis of germinating seeds.

It is found in the endoplasmic reticulum. This chain is Conglutin delta 1, found in Lupinus angustifolius (Narrow-leaved blue lupine).